The following is an 874-amino-acid chain: Mannuronan C5-epimerase AlgE6 (874 aa).

PbH1 repeat units follow at residues 133 to 155 (DRNVTIERVEVREMSGYGFDPHE), 157 to 179 (TINLVLRDSVAHHNGLDGFVADY), 180 to 202 (QIGGTFENNVAYANDRHGFNIVT), 204 to 226 (TNDFVMRNNVAYGNGGNGLVVQR), 234 to 256 (PENILIDGGSYYDNGLEGVLVKM), 257 to 279 (SNNVTVQNADIHGNGSSGVRVYG), 280 to 302 (AQGVQILGNQIHDNAKTAVAPEV), and 320 to 351 (TLNTRVEGNTITGSANSTYGVQERNDGTDFSS). Hemolysin-type calcium-binding repeat units lie at residues 383-394 (GTDGNDVLIGSD), 401-417 (GGAGDDRLDGGAGDDLL), 419-435 (GGAGRDRLTGGLGADTF), 562-578 (GGGGADQLYGYGGGDLL), 580-596 (GGAGRDRLTGGEGADTF), 723-739 (GGGGADQLYGYAGNDLL), and 741-757 (GGAGRDKLSGGEGADTF). A disordered region spans residues 401 to 420 (GGAGDDRLDGGAGDDLLDGG).

Belongs to the D-mannuronate C5-epimerase family. The cofactor is Ca(2+).

It is found in the secreted. The enzyme catalyses [(1-&gt;4)-beta-D-mannuronosyl](n) = [alginate](n). It participates in glycan biosynthesis; alginate biosynthesis. With respect to regulation, inhibited by zinc. Functionally, converts beta-D-mannuronic acid (M) to alpha-L-guluronic acid (G), producing a polymer with gel-forming capacity, required for the formation of the cyst coat. This is Mannuronan C5-epimerase AlgE6 from Azotobacter vinelandii.